The chain runs to 470 residues: Glutamyl-tRNA reductase (470 aa).

Substrate contacts are provided by residues 49-52 (TCNR), Ser-109, 114-116 (ESQ), and Gln-120. Catalysis depends on Cys-50, which acts as the Nucleophile. Residue 223 to 228 (GAGAVG) coordinates NADP(+).

This sequence belongs to the glutamyl-tRNA reductase family. As to quaternary structure, homodimer.

The catalysed reaction is (S)-4-amino-5-oxopentanoate + tRNA(Glu) + NADP(+) = L-glutamyl-tRNA(Glu) + NADPH + H(+). It functions in the pathway porphyrin-containing compound metabolism; protoporphyrin-IX biosynthesis; 5-aminolevulinate from L-glutamyl-tRNA(Glu): step 1/2. Catalyzes the NADPH-dependent reduction of glutamyl-tRNA(Glu) to glutamate 1-semialdehyde (GSA). The polypeptide is Glutamyl-tRNA reductase (Frankia alni (strain DSM 45986 / CECT 9034 / ACN14a)).